The primary structure comprises 343 residues: Polyprenal reductase 2 (343 aa).

6 consecutive transmembrane segments (helical) span residues 12-32 (GAWI…SIPT), 66-86 (FAHF…ATWM), 164-184 (MHIL…LSLC), 223-243 (PLMK…WGWI), 266-286 (IIPY…AEIV), and 291-311 (LLIA…FVAA).

It belongs to the steroid 5-alpha reductase family. Polyprenal reductase subfamily. As to expression, expressed in roots, leaves, stems and flowers.

It localises to the endoplasmic reticulum membrane. It catalyses the reaction a di-trans,poly-cis-dolichal + NADP(+) = a di-trans,poly-cis-polyprenal + NADPH + H(+). Its pathway is protein modification; protein glycosylation. Functionally, plays a key role in early steps of protein N-linked glycosylation by being involved in the conversion of polyprenol into dolichol. Acts as a polyprenal reductase that mediates the reduction of polyprenal into dolichal in a NADP-dependent mechanism. Dolichols are required for the synthesis of dolichol-linked monosaccharides and the oligosaccharide precursor used for N-glycosylation. Involved in the regulation of plant growth and reproductive processes. The sequence is that of Polyprenal reductase 2 from Arabidopsis thaliana (Mouse-ear cress).